Here is a 461-residue protein sequence, read N- to C-terminus: ERBB receptor feedback inhibitor 1 (461 aa).

S2 bears the N-acetylserine mark. A phosphothreonine mark is found at T126 and T130. The interval Q228–P353 is disordered. 2 positions are modified to phosphoserine: S251 and S272. A compositionally biased stretch (polar residues) spans S265–S274. Pro residues predominate over residues P283–P292. S301 is modified (phosphoserine). Residues D311–L324 are compositionally biased toward basic and acidic residues. Residues S325–S336 show a composition bias toward polar residues. The interval S333 to A362 is interaction with EGFR and ERBB2 and regulation of EGFR activation. S460 is modified (phosphoserine).

The protein belongs to the MIG6 family. As to quaternary structure, interacts with EGFR. Interacts with ERBB2. As to expression, detected in lung, in airway epithelial cells and alveolar type 2 cells (at protein level). Detected in uterus stroma, luminal epithelium and glandular epithelium.

It localises to the cytoplasm. Its subcellular location is the cell membrane. The protein resides in the nucleus. Negative regulator of EGFR signaling in skin morphogenesis. Acts as a negative regulator for several EGFR family members, including ERBB2, ERBB3 and ERBB4. Inhibits EGFR catalytic activity by interfering with its dimerization. Inhibits autophosphorylation of EGFR, ERBB2 and ERBB4. Important for normal keratinocyte proliferation and differentiation. Plays a role in modulating the response to steroid hormones in the uterus. Required for normal response to progesterone in the uterus and for fertility. Mediates epithelial estrogen responses in the uterus by regulating ESR1 levels and activation. Important for regulation of endometrium cell proliferation. Important for normal prenatal and perinatal lung development. This Mus musculus (Mouse) protein is ERBB receptor feedback inhibitor 1 (Errfi1).